The following is a 918-amino-acid chain: E3 ubiquitin-protein ligase CBL-B-A (918 aa).

The segment covering 1 to 18 (MASGSGSSSSTSSSALSG) has biased composition (low complexity). Residues 1–27 (MASGSGSSSSTSSSALSGRLPGSRSAN) form a disordered region. The 4H stretch occupies residues 46-178 (PPKQAAADRR…KAIFPSGQFQ (133 aa)). A Cbl-PTB domain is found at 46–354 (PPKQAAADRR…GRSYNPDLTG (309 aa)). Positions 179–251 (GDNFRITKAD…FEFDIFTRLF (73 aa)) are EF-hand-like. Ca(2+)-binding residues include Asp232, Thr234, Asn236, Tyr238, and Glu243. Residues 252-354 (QPWGSILRNW…GRSYNPDLTG (103 aa)) form an SH2-like region. Arg297 lines the 4-O-phospho-L-tyrosine pocket. Residues 355-383 (LCEPTPHDHIKVTQEQYELYCEMGSTFQL) form a linker region. The RING-type zinc-finger motif lies at 384-423 (CKICAENDKDVKIEPCGHLMCTSCLTSWQESDGQGCPFCR). 3 disordered regions span residues 481–582 (NERQ…RTCR), 780–831 (FPPA…PPAR), and 857–918 (HSDP…MRPT). The segment covering 483–497 (RQNSPVTSPGSSPLS) has biased composition (polar residues). Pro residues-rich tracts occupy residues 554–576 (LPAP…PIPP) and 821–830 (PSQPPPPPPA). A compositionally biased stretch (polar residues) spans 898 to 918 (KASNTKGELLLPNQNLIMRPT).

Interacts with several SH3 domain-containing proteins and with poly-ubiquitinated proteins.

The protein resides in the cytoplasm. The catalysed reaction is S-ubiquitinyl-[E2 ubiquitin-conjugating enzyme]-L-cysteine + [acceptor protein]-L-lysine = [E2 ubiquitin-conjugating enzyme]-L-cysteine + N(6)-ubiquitinyl-[acceptor protein]-L-lysine.. The protein operates within protein modification; protein ubiquitination. In terms of biological role, E3 ubiquitin-protein ligase which accepts ubiquitin from specific E2 ubiquitin-conjugating enzymes, and transfers it to substrates, generally promoting their degradation by the proteasome. This chain is E3 ubiquitin-protein ligase CBL-B-A (cblb-a), found in Xenopus laevis (African clawed frog).